Reading from the N-terminus, the 387-residue chain is Phosphoglycerate kinase (387 aa).

Substrate contacts are provided by residues 21–23 (DLN), Arg-36, 59–62 (HLGR), Arg-113, and Arg-146. Residues Lys-197, Glu-314, and 340–343 (GGDT) each bind ATP.

The protein belongs to the phosphoglycerate kinase family. Monomer.

It is found in the cytoplasm. The enzyme catalyses (2R)-3-phosphoglycerate + ATP = (2R)-3-phospho-glyceroyl phosphate + ADP. It functions in the pathway carbohydrate degradation; glycolysis; pyruvate from D-glyceraldehyde 3-phosphate: step 2/5. In Photorhabdus laumondii subsp. laumondii (strain DSM 15139 / CIP 105565 / TT01) (Photorhabdus luminescens subsp. laumondii), this protein is Phosphoglycerate kinase.